The sequence spans 807 residues: Glycerol-3-phosphate acyltransferase (807 aa).

Residues 308–313 (CHRSHM) carry the HXXXXD motif motif.

Belongs to the GPAT/DAPAT family.

It is found in the cell inner membrane. The enzyme catalyses sn-glycerol 3-phosphate + an acyl-CoA = a 1-acyl-sn-glycero-3-phosphate + CoA. It participates in phospholipid metabolism; CDP-diacylglycerol biosynthesis; CDP-diacylglycerol from sn-glycerol 3-phosphate: step 1/3. The sequence is that of Glycerol-3-phosphate acyltransferase from Shewanella sp. (strain MR-4).